The primary structure comprises 100 residues: Integration host factor subunit alpha (100 aa).

It belongs to the bacterial histone-like protein family. In terms of assembly, heterodimer of an alpha and a beta chain.

Its function is as follows. This protein is one of the two subunits of integration host factor, a specific DNA-binding protein that functions in genetic recombination as well as in transcriptional and translational control. The sequence is that of Integration host factor subunit alpha (ihfA) from Zymomonas mobilis subsp. mobilis (strain ATCC 31821 / ZM4 / CP4).